Reading from the N-terminus, the 398-residue chain is Phosphoglycerate kinase (398 aa).

Substrate is bound by residues 23–25, arginine 38, 61–64, arginine 122, and arginine 155; these read DFN and HLGK. Residues lysine 206, glycine 297, glutamate 328, and 354–357 each bind ATP; that span reads GGDS.

Belongs to the phosphoglycerate kinase family. In terms of assembly, monomer.

The protein resides in the cytoplasm. It carries out the reaction (2R)-3-phosphoglycerate + ATP = (2R)-3-phospho-glyceroyl phosphate + ADP. Its pathway is carbohydrate degradation; glycolysis; pyruvate from D-glyceraldehyde 3-phosphate: step 2/5. This Clostridium novyi (strain NT) protein is Phosphoglycerate kinase.